The chain runs to 152 residues: Large ribosomal subunit protein bL9 (152 aa).

It belongs to the bacterial ribosomal protein bL9 family.

Its function is as follows. Binds to the 23S rRNA. The polypeptide is Large ribosomal subunit protein bL9 (Parasynechococcus marenigrum (strain WH8102)).